We begin with the raw amino-acid sequence, 121 residues long: Large ribosomal subunit protein bL19 (121 aa).

The protein belongs to the bacterial ribosomal protein bL19 family.

This protein is located at the 30S-50S ribosomal subunit interface and may play a role in the structure and function of the aminoacyl-tRNA binding site. This chain is Large ribosomal subunit protein bL19, found in Polaromonas sp. (strain JS666 / ATCC BAA-500).